Reading from the N-terminus, the 263-residue chain is uncharacterized protein (263 aa).

In terms of domain architecture, DOD-type homing endonuclease spans 107–246 (ILGVLNGDGS…CCSFLEKLGI (140 aa)).

This is an uncharacterized protein from Methanocaldococcus jannaschii (strain ATCC 43067 / DSM 2661 / JAL-1 / JCM 10045 / NBRC 100440) (Methanococcus jannaschii).